The sequence spans 445 residues: Trigger factor (445 aa).

The region spanning 168–253 (GDAVIVDFVG…IHEVRAPQTP (86 aa)) is the PPIase FKBP-type domain.

Belongs to the FKBP-type PPIase family. Tig subfamily.

It localises to the cytoplasm. The catalysed reaction is [protein]-peptidylproline (omega=180) = [protein]-peptidylproline (omega=0). Its function is as follows. Involved in protein export. Acts as a chaperone by maintaining the newly synthesized protein in an open conformation. Functions as a peptidyl-prolyl cis-trans isomerase. This Hyphomonas neptunium (strain ATCC 15444) protein is Trigger factor.